Consider the following 430-residue polypeptide: Glucose-6-phosphate isomerase (430 aa).

The active-site Proton donor is the Glu-284. Catalysis depends on residues His-305 and Lys-420.

Belongs to the GPI family.

It localises to the cytoplasm. It carries out the reaction alpha-D-glucose 6-phosphate = beta-D-fructose 6-phosphate. It functions in the pathway carbohydrate biosynthesis; gluconeogenesis. The protein operates within carbohydrate degradation; glycolysis; D-glyceraldehyde 3-phosphate and glycerone phosphate from D-glucose: step 2/4. Functionally, catalyzes the reversible isomerization of glucose-6-phosphate to fructose-6-phosphate. The polypeptide is Glucose-6-phosphate isomerase (Mycoplasmopsis synoviae (strain 53) (Mycoplasma synoviae)).